Reading from the N-terminus, the 670-residue chain is Penicillin-binding protein activator LpoA (670 aa).

Positions 1–26 are cleaved as a signal peptide; sequence MLPSKVVHRKAVRTVPLLLAALIFAG. Residue Cys27 is the site of N-palmitoyl cysteine attachment. Residue Cys27 is the site of S-diacylglycerol cysteine attachment.

Belongs to the LpoA family. Interacts with PBP1a.

It is found in the cell outer membrane. Functionally, regulator of peptidoglycan synthesis that is essential for the function of penicillin-binding protein 1A (PBP1a). The polypeptide is Penicillin-binding protein activator LpoA (Erwinia tasmaniensis (strain DSM 17950 / CFBP 7177 / CIP 109463 / NCPPB 4357 / Et1/99)).